We begin with the raw amino-acid sequence, 352 residues long: Cyclin-dependent kinase 7 (352 aa).

One can recognise a Protein kinase domain in the interval 18-301 (YEKLDFLGEG…ASQALRKRYF (284 aa)). ATP contacts are provided by residues 24–32 (LGEGQFATV) and lysine 47. Residue aspartate 143 is the Proton acceptor of the active site. The residue at position 170 (serine 170) is a Phosphoserine; by CDK1 and CDK2. Threonine 176 carries the phosphothreonine; by CDK2 modification.

It belongs to the protein kinase superfamily. CMGC Ser/Thr protein kinase family. CDC2/CDKX subfamily. In terms of assembly, probably associates with cyclin-H (ccnh) and mat1 to form a multimeric active enzyme. Phosphorylation of Ser-170 during mitosis inactivates the enzyme. Phosphorylation of Thr-176 is required for activity. Phosphorylated at Ser-170 and Thr-176 by CDK2.

The protein resides in the nucleus. The enzyme catalyses L-seryl-[protein] + ATP = O-phospho-L-seryl-[protein] + ADP + H(+). It carries out the reaction L-threonyl-[protein] + ATP = O-phospho-L-threonyl-[protein] + ADP + H(+). It catalyses the reaction [DNA-directed RNA polymerase] + ATP = phospho-[DNA-directed RNA polymerase] + ADP + H(+). With respect to regulation, phosphorylation at Thr-176 is required for enzymatic activity. Functionally, serine/threonine kinase involved in cell cycle control and in RNA polymerase II-mediated RNA transcription. Cyclin-dependent kinases (CDKs) are activated by the binding to a cyclin and mediate the progression through the cell cycle. Each different complex controls a specific transition between 2 subsequent phases in the cell cycle. Required for both activation and complex formation of cdk1/cyclin-B during G2-M transition, and for activation of cdk2/cyclins during G1-S transition (but not complex formation). cdk7 is the catalytic subunit of the CDK-activating kinase (CAK) complex. CAK activates the cyclin-associated kinases cdk1, cdk2, cdk4 and cdk6 by threonine phosphorylation, thus regulating cell cycle progression. Initiates transcription by RNA polymerase II by mediating phosphorylation of polr2a at 'Ser-5' of the repetitive C-terminal domain (CTD) when polr2a is in complex with DNA, promoting dissociation from DNA and initiation. CAK complexed to the core-TFIIH basal transcription factor activates RNA polymerase II by serine phosphorylation of the CTD of polr2a, allowing its escape from the promoter and elongation of the transcripts. In Xenopus laevis (African clawed frog), this protein is Cyclin-dependent kinase 7 (cdk7).